A 91-amino-acid chain; its full sequence is DNA-directed RNA polymerase subunit omega (91 aa).

Belongs to the RNA polymerase subunit omega family. The RNAP catalytic core consists of 2 alpha, 1 beta, 1 beta' and 1 omega subunit. When a sigma factor is associated with the core the holoenzyme is formed, which can initiate transcription.

It catalyses the reaction RNA(n) + a ribonucleoside 5'-triphosphate = RNA(n+1) + diphosphate. Promotes RNA polymerase assembly. Latches the N- and C-terminal regions of the beta' subunit thereby facilitating its interaction with the beta and alpha subunits. The protein is DNA-directed RNA polymerase subunit omega of Enterobacter sp. (strain 638).